Consider the following 156-residue polypeptide: Aspartate carbamoyltransferase regulatory chain (156 aa).

The Zn(2+) site is built by Cys109, Cys114, Cys140, and Cys143.

This sequence belongs to the PyrI family. Contains catalytic and regulatory chains. Zn(2+) is required as a cofactor.

In terms of biological role, involved in allosteric regulation of aspartate carbamoyltransferase. This Methanosarcina barkeri (strain Fusaro / DSM 804) protein is Aspartate carbamoyltransferase regulatory chain.